The primary structure comprises 355 residues: Probable butyrate kinase (355 aa).

Belongs to the acetokinase family.

The protein localises to the cytoplasm. It catalyses the reaction butanoate + ATP = butanoyl phosphate + ADP. This Listeria welshimeri serovar 6b (strain ATCC 35897 / DSM 20650 / CCUG 15529 / CIP 8149 / NCTC 11857 / SLCC 5334 / V8) protein is Probable butyrate kinase.